Here is a 690-residue protein sequence, read N- to C-terminus: Glycine--tRNA ligase beta subunit (690 aa).

The protein belongs to the class-II aminoacyl-tRNA synthetase family. In terms of assembly, tetramer of two alpha and two beta subunits.

Its subcellular location is the cytoplasm. The catalysed reaction is tRNA(Gly) + glycine + ATP = glycyl-tRNA(Gly) + AMP + diphosphate. The sequence is that of Glycine--tRNA ligase beta subunit from Tolumonas auensis (strain DSM 9187 / NBRC 110442 / TA 4).